Here is a 214-residue protein sequence, read N- to C-terminus: Octanoyltransferase (214 aa).

Positions 36–214 (GRESEMVWLL…QQKFDTIFLQ (179 aa)) constitute a BPL/LPL catalytic domain. Substrate-binding positions include 75–82 (RGGKYSYH), 147–149 (AFG), and 160–162 (GFS). The Acyl-thioester intermediate role is filled by Cys-178.

The protein belongs to the LipB family.

Its subcellular location is the cytoplasm. The enzyme catalyses octanoyl-[ACP] + L-lysyl-[protein] = N(6)-octanoyl-L-lysyl-[protein] + holo-[ACP] + H(+). Its pathway is protein modification; protein lipoylation via endogenous pathway; protein N(6)-(lipoyl)lysine from octanoyl-[acyl-carrier-protein]: step 1/2. In terms of biological role, catalyzes the transfer of endogenously produced octanoic acid from octanoyl-acyl-carrier-protein onto the lipoyl domains of lipoate-dependent enzymes. Lipoyl-ACP can also act as a substrate although octanoyl-ACP is likely to be the physiological substrate. The sequence is that of Octanoyltransferase from Anaplasma marginale (strain Florida).